A 370-amino-acid polypeptide reads, in one-letter code: Platelet-derived growth factor D (370 aa).

The signal sequence occupies residues M1 to C18. In terms of domain architecture, CUB spans R52 to L170. Residues C109 and C131 are joined by a disulfide bond. N-linked (GlcNAc...) asparagine glycosylation occurs at N276. Cystine bridges form between C302–C360 and C306–C362.

The protein belongs to the PDGF/VEGF growth factor family. In terms of assembly, homodimer; disulfide-linked. Interacts with PDGFRB homodimers, and with heterodimers formed by PDGFRA and PDGFRB. Post-translationally, activated by proteolytic cleavage. Proteolytic removal of the N-terminal CUB domain releasing the core domain is necessary for unmasking the receptor-binding epitopes of the core domain. Cleavage after Arg-247 or Arg-249 by urokinase plasminogen activator gives rise to the active form.

It is found in the secreted. Functionally, growth factor that plays an essential role in the regulation of embryonic development, cell proliferation, cell migration, survival and chemotaxis. Potent mitogen for cells of mesenchymal origin. Plays an important role in wound healing. Induces macrophage recruitment, increased interstitial pressure, and blood vessel maturation during angiogenesis. Can initiate events that lead to a mesangial proliferative glomerulonephritis, including influx of monocytes and macrophages and production of extracellular matrix. The sequence is that of Platelet-derived growth factor D (PDGFD) from Pongo abelii (Sumatran orangutan).